The following is a 573-amino-acid chain: Protein phosphatase EYA3 (573 aa).

M1 bears the N-acetylmethionine mark. 2 disordered regions span residues 1-46 (MEEE…LASN) and 236-296 (TYQS…DATS). The span at 20–46 (SGEQTISQVSNPDVSDQKPETSSLASN) shows a compositional bias: polar residues. Over residues 254-271 (LSSGDPSTSPSLSQTTPS) the composition is skewed to low complexity. Phosphoserine occurs at positions 262 and 266. The active-site Nucleophile is D309. Mg(2+) is bound by residues D309 and D311. D311 serves as the catalytic Proton donor. 2 positions are modified to phosphoserine: S438 and S472. D537 lines the Mg(2+) pocket.

Belongs to the HAD-like hydrolase superfamily. EYA family. Interacts with SIX1 and DACH1, and probably SIX2, SIX4, SIX5. Mg(2+) is required as a cofactor. Post-translationally, ser-266 phosphorylation is required for localization at sites of DNA damage and directing interaction with H2AX.

The protein resides in the cytoplasm. It localises to the nucleus. It catalyses the reaction O-phospho-L-tyrosyl-[protein] + H2O = L-tyrosyl-[protein] + phosphate. Tyrosine phosphatase that specifically dephosphorylates 'Tyr-142' of histone H2AX (H2AXY142ph). 'Tyr-142' phosphorylation of histone H2AX plays a central role in DNA repair and acts as a mark that distinguishes between apoptotic and repair responses to genotoxic stress. Promotes efficient DNA repair by dephosphorylating H2AX, promoting the recruitment of DNA repair complexes containing MDC1. Its function as histone phosphatase probably explains its role in transcription regulation during organogenesis. Coactivates SIX1, and seems to coactivate SIX2, SIX4 and SIX5. The repression of precursor cell proliferation in myoblasts by SIX1 is switched to activation through recruitment of EYA3 to the SIX1-DACH1 complex and seems to be dependent on EYA3 phosphatase activity. May be involved in development of the eye. The sequence is that of Protein phosphatase EYA3 (EYA3) from Homo sapiens (Human).